The sequence spans 247 residues: Protein lin-28 homolog B (247 aa).

The interval 1-22 is disordered; sequence MAEGGASKGEEPEKLPGLAEDE. The region spanning 27 to 100 is the CSD domain; the sequence is HGTGHCKWFN…GLESIRVTGP (74 aa). Phosphoserine occurs at positions 94, 103, and 108. The interval 96–124 is disordered; that stretch reads RVTGPGGSPCLGSERRPKGKTLQKRKPKG. Positions 112–123 are enriched in basic residues; sequence PKGKTLQKRKPK. 2 CCHC-type zinc fingers span residues 125–142 and 147–164; these read DRCY…ECSL and KKCH…NCPH. Residues Cys127, Cys130, His135, Cys140, Cys149, Cys152, His157, and Cys162 each coordinate Zn(2+). A compositionally biased stretch (polar residues) spans 173–186; sequence SSQGRQEAESQPCS. Residues 173–247 form a disordered region; sequence SSQGRQEAES…GPLIQKRKKT (75 aa). The span at 207–219 shows a compositional bias: basic and acidic residues; that stretch reads VKSEMAEHSDRSP.

Belongs to the lin-28 family.

It localises to the nucleus. The protein localises to the nucleolus. In terms of biological role, suppressor of microRNA (miRNA) biogenesis, including that of let-7 and possibly of miR107, miR-143 and miR-200c. Binds primary let-7 transcripts (pri-let-7), including pri-let-7g and pri-let-7a-1, and sequester them in the nucleolus, away from the microprocessor complex, hence preventing their processing into mature miRNA. Does not act on pri-miR21. The repression of let-7 expression is required for normal development and contributes to maintain the pluripotent state of embryonic stem cells by preventing let-7-mediated differentiation. When overexpressed, recruits ZCCHC11/TUT4 uridylyltransferase to pre-let-7 transcripts, leading to their terminal uridylation and degradation. This activity might not be relevant in vivo, as LIN28B-mediated inhibition of let-7 miRNA maturation appears to be ZCCHC11-independent. Interaction with target pre-miRNAs occurs via an 5'-GGAG-3' motif in the pre-miRNA terminal loop. Mediates MYC-induced let-7 repression. When overexpressed, may stimulate growth of carcinoma cell lines. This Mus musculus (Mouse) protein is Protein lin-28 homolog B (Lin28b).